Reading from the N-terminus, the 303-residue chain is Phenoloxidase-activating factor 2 (303 aa).

The disordered stretch occupies residues 1–24 (PDRRPPEDPITPPPPTKEEQRAGC). The 257-residue stretch at 36 to 292 (IIGDKDGEAK…LRDWIDDKVA (257 aa)) folds into the Peptidase S1 domain. Intrachain disulfides connect Cys-173/Cys-247, Cys-206/Cys-227, and Cys-237/Cys-268.

Belongs to the peptidase S1 family. Heterodimer.

The protein localises to the secreted. Its function is as follows. Binds and activates processed prophenoloxidases PPO1 and PPO2 and thus is involved in the activation of the prophenoloxidase cascade probably following the recognition of pathogen-derived products. Binds the A.niger cell wall component alpha-1,3-glucan, a fungal pathogen-associated molecular pattern (PAMP) that activates the host immune response. This Galleria mellonella (Greater wax moth) protein is Phenoloxidase-activating factor 2 (LOC113510063).